A 527-amino-acid chain; its full sequence is Peptide chain release factor 3 (527 aa).

The 269-residue stretch at 10–278 (DKRRTFAIIS…AFIEYAPAPL (269 aa)) folds into the tr-type G domain. GTP is bound by residues 19–26 (SHPDAGKT), 87–91 (DTPGH), and 141–144 (NKLD).

It belongs to the TRAFAC class translation factor GTPase superfamily. Classic translation factor GTPase family. PrfC subfamily.

Its subcellular location is the cytoplasm. Increases the formation of ribosomal termination complexes and stimulates activities of RF-1 and RF-2. It binds guanine nucleotides and has strong preference for UGA stop codons. It may interact directly with the ribosome. The stimulation of RF-1 and RF-2 is significantly reduced by GTP and GDP, but not by GMP. The sequence is that of Peptide chain release factor 3 from Pelobacter propionicus (strain DSM 2379 / NBRC 103807 / OttBd1).